Here is a 608-residue protein sequence, read N- to C-terminus: RAS guanyl-releasing protein 2 (608 aa).

An N-terminal Ras-GEF domain is found at 4 to 126 (TLDLDKGCTV…SLIDIESVPT (123 aa)). Residues Ser116, Ser117, and Ser147 each carry the phosphoserine modification. Positions 154–387 (EPMELAEHLT…YQLSLQREPR (234 aa)) constitute a Ras-GEF domain. Positions 382–405 (LQREPRSKSSPTSPTSCTPPPRPP) are disordered. EF-hand domains follow at residues 426–461 (HIEK…FPYL) and 463–490 (AFGD…SSSV). Ca(2+) is bound by residues Asp439, Asp441, Asp443, His445, Glu450, Asp468, Asn470, Asp472, Cys474, and Glu479. The Phorbol-ester/DAG-type zinc finger occupies 498 to 548 (VHNFQESNSLRPVACRHCKALILGIYKQGLKCRACGVNCHKQCKERLSVEC). Residues Ser554 and Ser575 each carry the phosphoserine modification. Residues 555–596 (VSLEGSAPSPSPTHTHHRAFSFSLPRPGRRSSRPPEIREEEV) are disordered.

This sequence belongs to the RASGRP family. In terms of assembly, forms a signaling complex with RAP1 and BRAF. Interacts with F-actin. Interacts with RAP1. In terms of tissue distribution, detected in megakaryocytes, platelet and neutrophils but not in lymphocytes (at protein level). Isoform 1 and isoform 3 are detected in brain basal glanglia, heart, lung, spleen, liver and kidney interstitial cells.

It localises to the cytoplasm. Its subcellular location is the cytosol. The protein resides in the cell membrane. It is found in the synapse. The protein localises to the synaptosome. It localises to the cell projection. Its subcellular location is the ruffle membrane. Its function is as follows. Functions as a calcium- and DAG-regulated nucleotide exchange factor specifically activating Rap through the exchange of bound GDP for GTP. May also activate other GTPases such as RRAS, RRAS2, NRAS, KRAS but not HRAS. Functions in aggregation of platelets and adhesion of T-lymphocytes and neutrophils probably through inside-out integrin activation. May function in the muscarinic acetylcholine receptor M1/CHRM1 signaling pathway. The chain is RAS guanyl-releasing protein 2 (Rasgrp2) from Mus musculus (Mouse).